Reading from the N-terminus, the 169-residue chain is Ribosome maturation factor RimP (169 aa).

The protein belongs to the RimP family.

The protein resides in the cytoplasm. Its function is as follows. Required for maturation of 30S ribosomal subunits. This chain is Ribosome maturation factor RimP, found in Streptomyces avermitilis (strain ATCC 31267 / DSM 46492 / JCM 5070 / NBRC 14893 / NCIMB 12804 / NRRL 8165 / MA-4680).